Consider the following 237-residue polypeptide: Large ribosomal subunit protein uL1 (237 aa).

The protein belongs to the universal ribosomal protein uL1 family. As to quaternary structure, part of the 50S ribosomal subunit.

In terms of biological role, binds directly to 23S rRNA. The L1 stalk is quite mobile in the ribosome, and is involved in E site tRNA release. Functionally, protein L1 is also a translational repressor protein, it controls the translation of the L11 operon by binding to its mRNA. The sequence is that of Large ribosomal subunit protein uL1 from Synechococcus elongatus (strain ATCC 33912 / PCC 7942 / FACHB-805) (Anacystis nidulans R2).